A 363-amino-acid polypeptide reads, in one-letter code: DNA replication and repair protein RecF (363 aa).

Residue 30–37 (GINGSGKS) coordinates ATP.

It belongs to the RecF family.

It is found in the cytoplasm. In terms of biological role, the RecF protein is involved in DNA metabolism; it is required for DNA replication and normal SOS inducibility. RecF binds preferentially to single-stranded, linear DNA. It also seems to bind ATP. This Pseudoalteromonas atlantica (strain T6c / ATCC BAA-1087) protein is DNA replication and repair protein RecF.